A 101-amino-acid polypeptide reads, in one-letter code: Antiviral protein CAP (101 aa).

In terms of biological role, has antiviral activity against tobacco mosaic virus and antitumor activity. The sequence is that of Antiviral protein CAP from Coprinus comatus (Shaggy mane).